The chain runs to 267 residues: CUE domain-containing protein 2 (267 aa).

The tract at residues alanine 90–glutamate 125 is disordered. Residues arginine 91–arginine 107 show a composition bias toward basic and acidic residues. The 44-residue stretch at glutamate 124–glutamate 167 folds into the CUE domain.

It belongs to the CUEDC2 family. As to quaternary structure, interacts with PGR and ESR1.

The protein resides in the cytoplasm. It localises to the nucleus. Functionally, controls PGR and ESR1 protein levels through their targeting for ubiquitination and subsequent proteasomal degradation. This Rattus norvegicus (Rat) protein is CUE domain-containing protein 2 (Cuedc2).